The following is a 402-amino-acid chain: Serine/threonine transporter SstT (402 aa).

A run of 8 helical transmembrane segments spans residues 17 to 37, 44 to 64, 78 to 98, 138 to 158, 179 to 199, 212 to 232, 295 to 315, and 336 to 356; these read IAIGVVIGAILGLLIPKITVI, FVGGLKAIAPLLVSALVANAL, IIVLYLFGTFAAALTAVISHY, ALSQANYIGVLVWSVVFGFAM, IVRWIINLAPFGILGLVFDTI, VLILVLVGTMTFVALVINPII, MAGAAVTINVLTLAAVTTLGI, and ASGIAGGSLLLVPVACSLFGI.

Belongs to the dicarboxylate/amino acid:cation symporter (DAACS) (TC 2.A.23) family.

The protein resides in the cell membrane. It carries out the reaction L-serine(in) + Na(+)(in) = L-serine(out) + Na(+)(out). The catalysed reaction is L-threonine(in) + Na(+)(in) = L-threonine(out) + Na(+)(out). Its function is as follows. Involved in the import of serine and threonine into the cell, with the concomitant import of sodium (symport system). In Streptococcus thermophilus (strain ATCC BAA-250 / LMG 18311), this protein is Serine/threonine transporter SstT.